The primary structure comprises 104 residues: Co-chaperonin GroES 5 (104 aa).

It belongs to the GroES chaperonin family. In terms of assembly, heptamer of 7 subunits arranged in a ring. Interacts with the chaperonin GroEL.

The protein resides in the cytoplasm. Together with the chaperonin GroEL, plays an essential role in assisting protein folding. The GroEL-GroES system forms a nano-cage that allows encapsulation of the non-native substrate proteins and provides a physical environment optimized to promote and accelerate protein folding. GroES binds to the apical surface of the GroEL ring, thereby capping the opening of the GroEL channel. This chain is Co-chaperonin GroES 5, found in Rhizobium meliloti (strain 1021) (Ensifer meliloti).